Consider the following 165-residue polypeptide: Protein SprT (165 aa).

A SprT-like domain is found at 22-163 (LAQANLKLDR…RCVHCGEPLV (142 aa)). Residue histidine 78 participates in Zn(2+) binding. Residue glutamate 79 is part of the active site. A Zn(2+)-binding site is contributed by histidine 82.

Belongs to the SprT family. Zn(2+) is required as a cofactor.

The protein localises to the cytoplasm. The chain is Protein SprT from Salmonella agona (strain SL483).